A 339-amino-acid polypeptide reads, in one-letter code: MYTLARQLLFKLSPETSHDLSLDLIGAGGRLGLNGLLCKAPASLPVNVMGLQFPNPVGLAAGLDKNGAAIDGFAQLGFGFVEIGTVTPRPQPGNPKPRIFRLPEAEAIINRMGFNNLGVDNLLARVAAAKYKGVLGINIGKNFDTPVERAVDDYLICLDKVYAHASYVTVNVSSPNTPGLRSLQFGDSLKQLLADLATRRAELALRHGKHVPLAIKIAPDMTDEETAQVAQALIETGMDAVIATNTTLSRVGVEGMEHGDEAGGLSGAPVREKSTHTVKVLASELGGKLPIIAAGGITEGKHAAEKIAAGASLVQIYSGFIYKGPALIRESVDAIAAKR.

Residues 61 to 65 (AGLDK) and Thr85 contribute to the FMN site. Lys65 lines the substrate pocket. 110–114 (NRMGF) is a substrate binding site. The FMN site is built by Asn138 and Asn171. Asn171 contacts substrate. Catalysis depends on Ser174, which acts as the Nucleophile. Asn176 contributes to the substrate binding site. Residues Lys216 and Thr244 each contribute to the FMN site. Substrate is bound at residue 245–246 (NT). Residues Gly267, Gly296, and 317-318 (YS) contribute to the FMN site.

This sequence belongs to the dihydroorotate dehydrogenase family. Type 2 subfamily. As to quaternary structure, monomer. FMN serves as cofactor.

Its subcellular location is the cell membrane. The catalysed reaction is (S)-dihydroorotate + a quinone = orotate + a quinol. It functions in the pathway pyrimidine metabolism; UMP biosynthesis via de novo pathway; orotate from (S)-dihydroorotate (quinone route): step 1/1. Catalyzes the conversion of dihydroorotate to orotate with quinone as electron acceptor. This is Dihydroorotate dehydrogenase (quinone) from Pseudomonas fluorescens (strain Pf0-1).